The chain runs to 188 residues: Elongation factor P (188 aa).

Lys-34 is subject to N6-(3,6-diaminohexanoyl)-5-hydroxylysine.

Belongs to the elongation factor P family. In terms of processing, may be beta-lysylated on the epsilon-amino group of Lys-34 by the combined action of EpmA and EpmB, and then hydroxylated on the C5 position of the same residue by EpmC (if this protein is present). Lysylation is critical for the stimulatory effect of EF-P on peptide-bond formation. The lysylation moiety may extend toward the peptidyltransferase center and stabilize the terminal 3-CCA end of the tRNA. Hydroxylation of the C5 position on Lys-34 may allow additional potential stabilizing hydrogen-bond interactions with the P-tRNA.

It is found in the cytoplasm. Its pathway is protein biosynthesis; polypeptide chain elongation. Its function is as follows. Involved in peptide bond synthesis. Alleviates ribosome stalling that occurs when 3 or more consecutive Pro residues or the sequence PPG is present in a protein, possibly by augmenting the peptidyl transferase activity of the ribosome. Modification of Lys-34 is required for alleviation. This chain is Elongation factor P, found in Histophilus somni (strain 129Pt) (Haemophilus somnus).